The following is a 462-amino-acid chain: Trigger factor (462 aa).

The PPIase FKBP-type domain maps to 161-246 (GDVVVIDFVG…VKEVRAPKAA (86 aa)). The span at 428–437 (SVEDLRKDPD) shows a compositional bias: basic and acidic residues. The segment at 428–462 (SVEDLRKDPDEASADGEAAPAKPKKKAAAKKKAAE) is disordered. A compositionally biased stretch (basic residues) spans 449-462 (KPKKKAAAKKKAAE).

This sequence belongs to the FKBP-type PPIase family. Tig subfamily.

It is found in the cytoplasm. The catalysed reaction is [protein]-peptidylproline (omega=180) = [protein]-peptidylproline (omega=0). Involved in protein export. Acts as a chaperone by maintaining the newly synthesized protein in an open conformation. Functions as a peptidyl-prolyl cis-trans isomerase. The chain is Trigger factor from Paramagnetospirillum magneticum (strain ATCC 700264 / AMB-1) (Magnetospirillum magneticum).